The chain runs to 472 residues: MGKPKTLFNKIWQSHLVDVQDDGTCLIYIDRHLVHEVTSPQAFEGLRMTGRKVRRPEQTLAVADHNVPTTDRSKGIADEESRIQVEALGSNTAEFGVPYLEMDDIRQGIVHIVGPEQGFTLPGATIVCGDSHTSTHGAFGALAFGIGTSEVEHVLATQTLLQKPAKDMLVRIDGALRPGVSAKDIVLAVIGRIGTAGGTGHVIEFAGEAIRGLSMEGRMTVCNMTIEGGARAGLIAPDEVTFEYLKGRPFAPKGAAWEAAISYWKTLKTDEGAVYDTVIEMDAGAIEPQVTWGTSPENVVALSGRVPDPAAEADPGRRAAIERALAYMDLKPGMPMTEVAIDKVFIGSCTNGRIEDLRAAAAIAKGRKVAATVNAIVVPGSGLVKEQAESEGLDQIFLEAGFEWREPGCSMCLAMNADKLAPGERCASTSNRNFEGRQGKGGRTHLVSPAVAVASAITGKLTDAQSLAPSLG.

Residues Cys-349, Cys-409, and Cys-412 each coordinate [4Fe-4S] cluster.

This sequence belongs to the aconitase/IPM isomerase family. LeuC type 1 subfamily. In terms of assembly, heterodimer of LeuC and LeuD. [4Fe-4S] cluster is required as a cofactor.

It catalyses the reaction (2R,3S)-3-isopropylmalate = (2S)-2-isopropylmalate. The protein operates within amino-acid biosynthesis; L-leucine biosynthesis; L-leucine from 3-methyl-2-oxobutanoate: step 2/4. Functionally, catalyzes the isomerization between 2-isopropylmalate and 3-isopropylmalate, via the formation of 2-isopropylmaleate. The chain is 3-isopropylmalate dehydratase large subunit from Rhodospirillum rubrum (strain ATCC 11170 / ATH 1.1.1 / DSM 467 / LMG 4362 / NCIMB 8255 / S1).